Consider the following 391-residue polypeptide: Succinyl-diaminopimelate desuccinylase (391 aa).

Residue H67 coordinates Zn(2+). D69 is a catalytic residue. D101 lines the Zn(2+) pocket. The active-site Proton acceptor is the E135. Residues E136, E164, and H353 each contribute to the Zn(2+) site.

Belongs to the peptidase M20A family. DapE subfamily. As to quaternary structure, homodimer. Requires Zn(2+) as cofactor. Co(2+) is required as a cofactor.

The enzyme catalyses N-succinyl-(2S,6S)-2,6-diaminopimelate + H2O = (2S,6S)-2,6-diaminopimelate + succinate. It functions in the pathway amino-acid biosynthesis; L-lysine biosynthesis via DAP pathway; LL-2,6-diaminopimelate from (S)-tetrahydrodipicolinate (succinylase route): step 3/3. In terms of biological role, catalyzes the hydrolysis of N-succinyl-L,L-diaminopimelic acid (SDAP), forming succinate and LL-2,6-diaminopimelate (DAP), an intermediate involved in the bacterial biosynthesis of lysine and meso-diaminopimelic acid, an essential component of bacterial cell walls. The chain is Succinyl-diaminopimelate desuccinylase from Rickettsia bellii (strain RML369-C).